We begin with the raw amino-acid sequence, 577 residues long: MNIQALLSEKVSQAMIAAGAPADCEPQVRQSAKVQFGDYQANGMMAVAKKLGMAPRQLAEQVLTHLDLSGIASKVEIAGPGFINIFLEPAFLAEQVQQALASDRLGVSQPTRQTIVVDYSAPNVAKEMHVGHLRSTIIGDAAVRTLEFLGHHVIRANHVGDWGTQFGMLIAWLEKQQQENAGDMALADLEGFYRDAKKHYDEDEAFAERARNYVVKLQSGDTYFREMWRKLVDITMTQNQITYDRLNVTLTRDDVMGESLYNPMLPGIVADLKAKGLAVESEGATVVFLDEFKNKEGDPMGVIIQKKDGGYLYTTTDIACAKYRYETLHADRVLYYIDSRQHQHLMQAWTIVRKAGYVPDSVPLEHHMFGMMLGKDGKPFKTRAGGTVKLADLLDEALERARRLVAEKNPDMSADELEKLANAVGIGAVKYADLSKNRTTDYIFDWDNMLAFEGNTAPYMQYAYTRVLSVFRKADIDEQALASAPVIISEDREAQLAARLLQFEETLTVVAREGTPHVMCAYLYDVAGLFSGFYEHCPILSAENDAVRNSRLKLAQLTAKTLKLGLDTLGIETVERM.

The 'HIGH' region signature appears at 122 to 132 (PNVAKEMHVGH).

This sequence belongs to the class-I aminoacyl-tRNA synthetase family. As to quaternary structure, monomer.

The protein resides in the cytoplasm. The enzyme catalyses tRNA(Arg) + L-arginine + ATP = L-arginyl-tRNA(Arg) + AMP + diphosphate. The protein is Arginine--tRNA ligase of Salmonella paratyphi B (strain ATCC BAA-1250 / SPB7).